We begin with the raw amino-acid sequence, 229 residues long: 2,3-bisphosphoglycerate-dependent phosphoglycerate mutase (229 aa).

Substrate-binding positions include 7 to 14, 20 to 21, Arg-59, 86 to 89, Lys-97, 113 to 114, and 182 to 183; these read RHGQSEWN, TG, ERHY, RR, and GN. His-8 serves as the catalytic Tele-phosphohistidine intermediate. Glu-86 functions as the Proton donor/acceptor in the catalytic mechanism.

Belongs to the phosphoglycerate mutase family. BPG-dependent PGAM subfamily.

The enzyme catalyses (2R)-2-phosphoglycerate = (2R)-3-phosphoglycerate. It functions in the pathway carbohydrate degradation; glycolysis; pyruvate from D-glyceraldehyde 3-phosphate: step 3/5. Catalyzes the interconversion of 2-phosphoglycerate and 3-phosphoglycerate. This Listeria welshimeri serovar 6b (strain ATCC 35897 / DSM 20650 / CCUG 15529 / CIP 8149 / NCTC 11857 / SLCC 5334 / V8) protein is 2,3-bisphosphoglycerate-dependent phosphoglycerate mutase.